The sequence spans 122 residues: Large ribosomal subunit protein uL14c (122 aa).

The protein belongs to the universal ribosomal protein uL14 family. In terms of assembly, part of the 50S ribosomal subunit.

Its subcellular location is the plastid. It is found in the chloroplast. Binds to 23S rRNA. The polypeptide is Large ribosomal subunit protein uL14c (Lactuca sativa (Garden lettuce)).